We begin with the raw amino-acid sequence, 181 residues long: CASP-like protein UU-1 (181 aa).

The Cytoplasmic portion of the chain corresponds to 1-30 (MTMELESQEVVVETTTAAAAARAASAAHVR). The chain crosses the membrane as a helical span at residues 31 to 51 (TTVALRLLAFAASLAAAVVVA). Residues 52 to 65 (TNRQERWGITVTFK) lie on the Extracellular side of the membrane. A helical membrane pass occupies residues 66-86 (MFAVWEAFVAINFACAAYALL). Residues 87–107 (TAVFVKKLVSKHWLHHMDQFT) lie on the Cytoplasmic side of the membrane. The helical transmembrane segment at 108-128 (VNLQAASTAGAGAVGSVAMWG) threads the bilayer. Residues 129–147 (NEPSGWYAVCRLYRLYCDR) lie on the Extracellular side of the membrane. The helical transmembrane segment at 148–168 (GAVSLALAFVAFVAFGVASSL) threads the bilayer. Over 169-181 (SRYPRAPPPPAPR) the chain is Cytoplasmic.

The protein belongs to the Casparian strip membrane proteins (CASP) family. Homodimer and heterodimers.

It is found in the cell membrane. The polypeptide is CASP-like protein UU-1 (Sorghum bicolor (Sorghum)).